The sequence spans 297 residues: tRNA (guanine(37)-N(1))/4-demethylwyosine(37)-methyltransferase Taw22 (297 aa).

Residues arginine 89, phenylalanine 106, and 128-129 (EL) each bind S-adenosyl-L-methionine.

It belongs to the class I-like SAM-binding methyltransferase superfamily. TRM5/TYW2 family.

It localises to the cytoplasm. It catalyses the reaction guanosine(37) in tRNA + S-adenosyl-L-methionine = N(1)-methylguanosine(37) in tRNA + S-adenosyl-L-homocysteine + H(+). The enzyme catalyses 4-demethylwyosine(37) in tRNA(Phe) + S-adenosyl-L-methionine = isowyosine(37) in tRNA(Phe) + S-adenosyl-L-homocysteine + H(+). Its function is as follows. Catalyzes both the N1-methylation of guanosine and the C7-methylation of 4-demethylwyosine (imG-14) at position 37 in tRNA(Phe). This Nanoarchaeum equitans (strain Kin4-M) protein is tRNA (guanine(37)-N(1))/4-demethylwyosine(37)-methyltransferase Taw22.